The chain runs to 215 residues: Inositol diphosphatase DSP1 (215 aa).

In terms of domain architecture, Tyrosine-protein phosphatase spans 58 to 209 (NFSMVDNGIF…VSSFSHIPMS (152 aa)). Residues 114-126 (FGIEGNKEPFVNI) form a WPD loop important for active site topology region. Residues Asn-125, Ile-126, His-129, and Lys-130 each contribute to the 1D-myo-inositol hexakisphosphate site. Cys-150 serves as the catalytic Phosphocysteine intermediate.

Belongs to the protein-tyrosine phosphatase family. Atypical dual-specificity phosphatase Siw14-like subfamily. In terms of assembly, homodimer and homohexamer; behaves as a monomer in solution. In terms of tissue distribution, highly expressed in siliques and at lower levels in roots, leaves and flowers.

The catalysed reaction is 5-diphospho-1D-myo-inositol 1,2,3,4,6-pentakisphosphate + H2O = 1D-myo-inositol hexakisphosphate + phosphate + H(+). The enzyme catalyses 1,5-bis(diphospho)-1D-myo-inositol 2,3,4,6-tetrakisphosphate + H2O = 1-diphospho-1D-myo-inositol 2,3,4,5,6-pentakisphosphate + phosphate + 2 H(+). It catalyses the reaction 3,5-bis(diphospho)-1D-myo-inositol 1,2,4,6-tetrakisphosphate + H2O = 3-diphospho-1D-myo-inositol 1,2,4,5,6-pentakisphosphate + phosphate + 2 H(+). It carries out the reaction 6-diphospho-1D-myo-inositol pentakisphosphate + H2O = 1D-myo-inositol hexakisphosphate + phosphate + H(+). The catalysed reaction is 5-diphospho-1D-myo-inositol 1,3,4,6-tetrakisphosphate + H2O = 1D-myo-inositol 1,3,4,5,6-pentakisphosphate + phosphate + H(+). Its activity is regulated as follows. Inhibited by manganese, calcium and zinc ions but not magnesium ions. In terms of biological role, cleaves the beta-phosphate at the 5-position of soluble inositol pyrophosphates. Has highest activity on 5-diphosphoinositol 1,2,3,4,6-pentakisphosphate (5-InsP(7)), 1,5-bis-diphosphoinositol 2,3,4,6-tetrakisphosphate (1,5-InsP(8)) and 3,5-InsP(8), but has weak activity against 1-diphosphoinositol 2,3,4,5,6-pentakisphosphate (1-InsP(7)). Dephosphorylates the phosphoinositides PI(3,4,5)P3, PI(3,5)P2, but not PI(3)P, PI(3,4)P2 or PI(4,5)P2. Possesses phosphotyrosine phosphatase activity in vitro, and can hydrolyze para-nitrophenyl phosphate, O-methylfluorescein phosphate, polyphosphate and ATP. In Arabidopsis thaliana (Mouse-ear cress), this protein is Inositol diphosphatase DSP1.